A 510-amino-acid polypeptide reads, in one-letter code: Ribonuclease Y (510 aa).

A helical membrane pass occupies residues 2–22 (IYIIFSSIFAGFILGFLVRVF). The KH domain occupies 198-258 (TVASVELPND…IRKELAKRTL (61 aa)). Residues 324-419 (VLSHSKETAI…VQIADAISAS (96 aa)) enclose the HD domain.

It belongs to the RNase Y family.

It is found in the cell membrane. Functionally, endoribonuclease that initiates mRNA decay. This Borrelia garinii subsp. bavariensis (strain ATCC BAA-2496 / DSM 23469 / PBi) (Borreliella bavariensis) protein is Ribonuclease Y.